We begin with the raw amino-acid sequence, 581 residues long: Zinc finger protein 319 (581 aa).

A compositionally biased stretch (low complexity) spans 1 to 22 (MSESWQQPPQTQPQQPQAPQPQ). Positions 1–39 (MSESWQQPPQTQPQQPQAPQPQHHAETPPALAEHTLPPG) are disordered. The C2H2-type 1 zinc-finger motif lies at 75–99 (PKCGVCGHDLAHLSSPHEHQCLAGH). A C2H2-type 2; degenerate zinc finger spans residues 103–125 (FQCTQCLKIFHQATDLLEHQCVQ). K129 participates in a covalent cross-link: Glycyl lysine isopeptide (Lys-Gly) (interchain with G-Cter in SUMO2). C2H2-type zinc fingers lie at residues 131–153 (FVCGVCKMGFSLLTSLAQHHSSH), 201–223 (YSCPVCQKPFKHLSELSRHERIH), 229–251 (YKCTLCDKSFSQSSHLVHHKRTH), and 257–279 (YKCAVCEKTFKHRSHLVRHMYAH). S280 bears the Phosphoserine mark. The C2H2-type 7; degenerate zinc-finger motif lies at 286 to 308 (FRCNVCELHFKESSELLQHPCTP). 3 C2H2-type zinc fingers span residues 314-336 (FRCGECQKAFKRPSDLRQHERTH), 342-364 (FKCDLCPMGFKQQYALMRHRRTH), and 370-392 (FKCGLCEKGFGQPSHLLYHQHVH). Residues 398-420 (FKCPVCQKGFDQSAELLRHKCLP) form a C2H2-type 11; degenerate zinc finger. The segment at 427-449 (FKCPVCNKAYKRASALQKHQLSH) adopts a C2H2-type 12 zinc-finger fold. The segment at 457–479 (LRCTLCERRFFSSSEFVQHRCDP) adopts a C2H2-type 13; degenerate zinc-finger fold. C2H2-type zinc fingers lie at residues 485–507 (LKCPDCEKRFKYASDLQRHRRVH), 513–535 (YKCPSCDKAFKQREHLNKHQGVH), and 541–563 (FKCVWCGERFLDVALLQEHSAQH).

The protein belongs to the krueppel C2H2-type zinc-finger protein family.

It is found in the nucleus. Functionally, may be involved in transcriptional regulation. The protein is Zinc finger protein 319 (Znf319) of Mus musculus (Mouse).